Consider the following 347-residue polypeptide: Ribosomal RNA small subunit methyltransferase H (347 aa).

S-adenosyl-L-methionine contacts are provided by residues 50-52 (GGH), aspartate 69, phenylalanine 96, aspartate 125, and glutamine 132.

The protein belongs to the methyltransferase superfamily. RsmH family.

The protein resides in the cytoplasm. The catalysed reaction is cytidine(1402) in 16S rRNA + S-adenosyl-L-methionine = N(4)-methylcytidine(1402) in 16S rRNA + S-adenosyl-L-homocysteine + H(+). Functionally, specifically methylates the N4 position of cytidine in position 1402 (C1402) of 16S rRNA. This is Ribosomal RNA small subunit methyltransferase H from Corynebacterium aurimucosum (strain ATCC 700975 / DSM 44827 / CIP 107346 / CN-1) (Corynebacterium nigricans).